The following is a 678-amino-acid chain: Serine/threonine-protein kinase mph1 (678 aa).

2 disordered regions span residues 39–93 (KNDT…NSAL) and 114–209 (LPST…SNSV). Composition is skewed to polar residues over residues 41 to 66 (DTFS…SSGA) and 114 to 125 (LPSTNASHSEVS). The region spanning 316 to 607 (FIKLGVVGKG…LVHPFLNPLP (292 aa)) is the Protein kinase domain. Residues 322–330 (VGKGGSSMV) and lysine 345 each bind ATP. The Proton acceptor role is filled by aspartate 442.

It belongs to the protein kinase superfamily. Ser/Thr protein kinase family.

It carries out the reaction L-seryl-[protein] + ATP = O-phospho-L-seryl-[protein] + ADP + H(+). The catalysed reaction is L-threonyl-[protein] + ATP = O-phospho-L-threonyl-[protein] + ADP + H(+). The enzyme catalyses L-tyrosyl-[protein] + ATP = O-phospho-L-tyrosyl-[protein] + ADP + H(+). Involved in mitotic spindle assembly checkpoint signaling, a process that delays anaphase until chromosomes are bioriented on the spindle, and in the repair of incorrect mitotic kinetochore-spindle microtubule attachments. Phosphorylates spc7/knl1 on MELT motifs; phosphorylation is required for recruitment of the BUB1-BUB3 complex to kinetochores. The chain is Serine/threonine-protein kinase mph1 from Schizosaccharomyces pombe (strain 972 / ATCC 24843) (Fission yeast).